The following is a 369-amino-acid chain: DNA replication and repair protein RecF (369 aa).

30-37 contributes to the ATP binding site; sequence GQNAQGKT.

This sequence belongs to the RecF family.

The protein localises to the cytoplasm. Functionally, the RecF protein is involved in DNA metabolism; it is required for DNA replication and normal SOS inducibility. RecF binds preferentially to single-stranded, linear DNA. It also seems to bind ATP. The polypeptide is DNA replication and repair protein RecF (Acetivibrio thermocellus (strain ATCC 27405 / DSM 1237 / JCM 9322 / NBRC 103400 / NCIMB 10682 / NRRL B-4536 / VPI 7372) (Clostridium thermocellum)).